A 493-amino-acid polypeptide reads, in one-letter code: Cytochrome c-552 (493 aa).

A signal peptide spans 1 to 25; it reads MEKKLKSWQGWLLFCGAMAVVFVLG. Histidine 116 is a heme c binding site. Positions 144, 147, and 148 each coordinate heme. Heme c contacts are provided by cysteine 182, cysteine 185, histidine 186, cysteine 224, cysteine 227, and histidine 228. 4 residues coordinate Ca(2+): glutamate 230, tyrosine 231, lysine 276, and glutamine 278. Tyrosine 231 provides a ligand contact to substrate. Histidine 279 is a substrate binding site. Heme c contacts are provided by histidine 290, cysteine 297, cysteine 300, histidine 301, histidine 315, cysteine 328, cysteine 331, histidine 332, and histidine 407.

The protein belongs to the cytochrome c-552 family. The cofactor is Ca(2+). It depends on heme c as a cofactor.

It is found in the periplasm. The enzyme catalyses 6 Fe(III)-[cytochrome c] + NH4(+) + 2 H2O = 6 Fe(II)-[cytochrome c] + nitrite + 8 H(+). The protein operates within nitrogen metabolism; nitrate reduction (assimilation). In terms of biological role, catalyzes the reduction of nitrite to ammonia, consuming six electrons in the process. This chain is Cytochrome c-552, found in Bacteroides fragilis (strain YCH46).